The primary structure comprises 314 residues: Ribonuclease Z (314 aa).

Residues His-61, His-63, Asp-65, His-66, His-137, Asp-207, and His-263 each coordinate Zn(2+). Catalysis depends on Asp-65, which acts as the Proton acceptor.

The protein belongs to the RNase Z family. Homodimer. The cofactor is Zn(2+).

It catalyses the reaction Endonucleolytic cleavage of RNA, removing extra 3' nucleotides from tRNA precursor, generating 3' termini of tRNAs. A 3'-hydroxy group is left at the tRNA terminus and a 5'-phosphoryl group is left at the trailer molecule.. Its function is as follows. Zinc phosphodiesterase, which displays some tRNA 3'-processing endonuclease activity. Probably involved in tRNA maturation, by removing a 3'-trailer from precursor tRNA. This is Ribonuclease Z from Thermococcus gammatolerans (strain DSM 15229 / JCM 11827 / EJ3).